A 1358-amino-acid polypeptide reads, in one-letter code: Probable aldehyde oxidase 1 (1358 aa).

The 2Fe-2S ferredoxin-type domain maps to 4-91 (AAAVVAVNGE…HCAVTTSEGI (88 aa)). Residues C43, C48, C51, and C73 each contribute to the [2Fe-2S] cluster site. In terms of domain architecture, FAD-binding PCMH-type spans 236–418 (AVTGDGCWFH…ISISIPDWCS (183 aa)). The interval 540–567 (KPENANNVPNGSCTTNGTTNGSAESTVD) is disordered. The segment covering 549–561 (NGSCTTNGTTNGS) has biased composition (low complexity).

It belongs to the xanthine dehydrogenase family. In terms of assembly, aldehyde oxidases (AO) are homodimers and heterodimers of AO subunits. [2Fe-2S] cluster is required as a cofactor. The cofactor is FAD. It depends on Mo-molybdopterin as a cofactor.

The enzyme catalyses an aldehyde + O2 + H2O = a carboxylate + H2O2 + H(+). The sequence is that of Probable aldehyde oxidase 1 from Oryza sativa subsp. japonica (Rice).